The sequence spans 299 residues: Putative peptidyl-prolyl cis-trans isomerase HP_0175 (299 aa).

The signal sequence occupies residues 1-21 (MKKNILNLALVGALSTSFLMA). Residues 154–253 (KQEAHARHIL…FGYHIIYLIS (100 aa)) enclose the PpiC domain.

It catalyses the reaction [protein]-peptidylproline (omega=180) = [protein]-peptidylproline (omega=0). The chain is Putative peptidyl-prolyl cis-trans isomerase HP_0175 from Helicobacter pylori (strain ATCC 700392 / 26695) (Campylobacter pylori).